A 203-amino-acid polypeptide reads, in one-letter code: Thymidylate kinase (203 aa).

An ATP-binding site is contributed by 14-21; it reads GMDGIGKS.

The protein belongs to the thymidylate kinase family.

It catalyses the reaction dTMP + ATP = dTDP + ADP. Its function is as follows. Phosphorylation of dTMP to form dTDP in both de novo and salvage pathways of dTTP synthesis. In Rickettsia typhi (strain ATCC VR-144 / Wilmington), this protein is Thymidylate kinase.